The sequence spans 475 residues: Glycogen synthase (475 aa).

Lysine 15 contributes to the ADP-alpha-D-glucose binding site.

Belongs to the glycosyltransferase 1 family. Bacterial/plant glycogen synthase subfamily.

The catalysed reaction is [(1-&gt;4)-alpha-D-glucosyl](n) + ADP-alpha-D-glucose = [(1-&gt;4)-alpha-D-glucosyl](n+1) + ADP + H(+). It participates in glycan biosynthesis; glycogen biosynthesis. Functionally, synthesizes alpha-1,4-glucan chains using ADP-glucose. In Chlamydia abortus (strain DSM 27085 / S26/3) (Chlamydophila abortus), this protein is Glycogen synthase.